A 217-amino-acid chain; its full sequence is Translation initiation factor IF-3 (217 aa).

Residues 170–217 are disordered; it reads KKTEAMAEARQAQEARKADAKANPGKSQNAAETDDAEAEAPAEAPAEA. A compositionally biased stretch (basic and acidic residues) spans 172-189; that stretch reads TEAMAEARQAQEARKADA.

The protein belongs to the IF-3 family. In terms of assembly, monomer.

It localises to the cytoplasm. Functionally, IF-3 binds to the 30S ribosomal subunit and shifts the equilibrium between 70S ribosomes and their 50S and 30S subunits in favor of the free subunits, thus enhancing the availability of 30S subunits on which protein synthesis initiation begins. In Streptomyces coelicolor (strain ATCC BAA-471 / A3(2) / M145), this protein is Translation initiation factor IF-3.